A 400-amino-acid chain; its full sequence is Phosphoglycerate kinase (400 aa).

Residues 23 to 25, R38, 61 to 64, R120, and R153 each bind substrate; these read DLN and HFGR. Residues K203, E325, and 355–358 each bind ATP; that span reads GGDT.

The protein belongs to the phosphoglycerate kinase family. In terms of assembly, monomer.

The protein localises to the cytoplasm. It carries out the reaction (2R)-3-phosphoglycerate + ATP = (2R)-3-phospho-glyceroyl phosphate + ADP. Its pathway is carbohydrate degradation; glycolysis; pyruvate from D-glyceraldehyde 3-phosphate: step 2/5. This Methylorubrum extorquens (strain PA1) (Methylobacterium extorquens) protein is Phosphoglycerate kinase.